The following is a 559-amino-acid chain: Urocanate hydratase (559 aa).

NAD(+)-binding positions include 50–51 (GG), Gln-128, 174–176 (GMG), Asp-194, Arg-199, 240–241 (NA), 261–265 (QTSAH), 271–272 (YI), and Tyr-320. The active site involves Cys-408. Gly-490 contacts NAD(+).

Belongs to the urocanase family. NAD(+) is required as a cofactor.

It is found in the cytoplasm. The enzyme catalyses 4-imidazolone-5-propanoate = trans-urocanate + H2O. It functions in the pathway amino-acid degradation; L-histidine degradation into L-glutamate; N-formimidoyl-L-glutamate from L-histidine: step 2/3. Catalyzes the conversion of urocanate to 4-imidazolone-5-propionate. The chain is Urocanate hydratase from Halalkalibacterium halodurans (strain ATCC BAA-125 / DSM 18197 / FERM 7344 / JCM 9153 / C-125) (Bacillus halodurans).